We begin with the raw amino-acid sequence, 96 residues long: Protein RnfH (96 aa).

This sequence belongs to the UPF0125 (RnfH) family.

This Escherichia coli O17:K52:H18 (strain UMN026 / ExPEC) protein is Protein RnfH.